We begin with the raw amino-acid sequence, 122 residues long: Cytochrome c3 hydrogenase large chain (122 aa).

The cofactor is Fe cation.

It carries out the reaction 2 Fe(III)-[cytochrome c3] + H2 = 2 Fe(II)-[cytochrome c3] + 2 H(+). In Acidithiobacillus ferrooxidans (Thiobacillus ferrooxidans), this protein is Cytochrome c3 hydrogenase large chain (hoxG).